We begin with the raw amino-acid sequence, 328 residues long: Homeobox protein Hox-D1 (328 aa).

The short motif at 204–209 (TFEWMK) is the Antp-type hexapeptide element. The segment at residues 229 to 288 (SSAIRTNFSTKQLTELEKEFHFNKYLTRARRIEIANCLHLNDTQVKIWFQNRRMKQKKRE) is a DNA-binding region (homeobox). The tract at residues 305-328 (PLSGTTPTKFIKNPGSPSQSQEPS) is disordered. Positions 319 to 328 (GSPSQSQEPS) are enriched in polar residues.

The protein belongs to the Antp homeobox family. Labial subfamily.

The protein localises to the nucleus. Sequence-specific transcription factor which is part of a developmental regulatory system that provides cells with specific positional identities on the anterior-posterior axis. Acts on the anterior body structures. This Homo sapiens (Human) protein is Homeobox protein Hox-D1 (HOXD1).